The primary structure comprises 132 residues: Extracellular small neutral protease (132 aa).

2 residues coordinate Ca(2+): Asp76 and Thr78. Zn(2+) is bound at residue His83. Residue Glu84 is part of the active site. Residues His87 and Asp93 each contribute to the Zn(2+) site. Cysteines 99 and 112 form a disulfide.

Belongs to the peptidase M7 family. Ca(2+) is required as a cofactor. Zn(2+) serves as cofactor.

The protein resides in the secreted. It carries out the reaction Hydrolyzes proteins with a preference for Tyr or Phe in the P1' position. Has no action on amino-acid p-nitroanilides.. Specifically hydrolyzes the peptide bond at the imino side of aromatic residues. The polypeptide is Extracellular small neutral protease (snpA) (Streptomyces caespitosus).